The primary structure comprises 334 residues: NH(3)-dependent NAD(+) synthetase (334 aa).

47-54 (GLSGGIDS) is a binding site for ATP. Asp53 serves as a coordination point for Mg(2+). Arg183 is a binding site for deamido-NAD(+). Position 203 (Thr203) interacts with ATP. Glu208 serves as a coordination point for Mg(2+). 2 residues coordinate deamido-NAD(+): Lys216 and Asp223. The ATP site is built by Lys232 and Thr254.

The protein belongs to the NAD synthetase family. As to quaternary structure, homodimer.

It carries out the reaction deamido-NAD(+) + NH4(+) + ATP = AMP + diphosphate + NAD(+) + H(+). It participates in cofactor biosynthesis; NAD(+) biosynthesis; NAD(+) from deamido-NAD(+) (ammonia route): step 1/1. In terms of biological role, catalyzes the ATP-dependent amidation of deamido-NAD to form NAD. Uses ammonia as a nitrogen source. The chain is NH(3)-dependent NAD(+) synthetase from Rhizobium meliloti (strain 1021) (Ensifer meliloti).